The chain runs to 235 residues: 2,3,4,5-tetrahydropyridine-2,6-dicarboxylate N-acetyltransferase (235 aa).

It belongs to the transferase hexapeptide repeat family. DapH subfamily.

It carries out the reaction (S)-2,3,4,5-tetrahydrodipicolinate + acetyl-CoA + H2O = L-2-acetamido-6-oxoheptanedioate + CoA. Its pathway is amino-acid biosynthesis; L-lysine biosynthesis via DAP pathway; LL-2,6-diaminopimelate from (S)-tetrahydrodipicolinate (acetylase route): step 1/3. Catalyzes the transfer of an acetyl group from acetyl-CoA to tetrahydrodipicolinate. In Exiguobacterium sibiricum (strain DSM 17290 / CCUG 55495 / CIP 109462 / JCM 13490 / 255-15), this protein is 2,3,4,5-tetrahydropyridine-2,6-dicarboxylate N-acetyltransferase.